The following is a 424-amino-acid chain: Serine--tRNA ligase (424 aa).

Residue 231-233 (TAE) participates in L-serine binding. 262–264 (RAE) lines the ATP pocket. L-serine is bound at residue glutamate 285. 349 to 352 (EISS) lines the ATP pocket. Position 385 (serine 385) interacts with L-serine.

The protein belongs to the class-II aminoacyl-tRNA synthetase family. Type-1 seryl-tRNA synthetase subfamily. Homodimer. The tRNA molecule binds across the dimer.

The protein localises to the cytoplasm. The enzyme catalyses tRNA(Ser) + L-serine + ATP = L-seryl-tRNA(Ser) + AMP + diphosphate + H(+). It carries out the reaction tRNA(Sec) + L-serine + ATP = L-seryl-tRNA(Sec) + AMP + diphosphate + H(+). It participates in aminoacyl-tRNA biosynthesis; selenocysteinyl-tRNA(Sec) biosynthesis; L-seryl-tRNA(Sec) from L-serine and tRNA(Sec): step 1/1. Catalyzes the attachment of serine to tRNA(Ser). Is also able to aminoacylate tRNA(Sec) with serine, to form the misacylated tRNA L-seryl-tRNA(Sec), which will be further converted into selenocysteinyl-tRNA(Sec). This is Serine--tRNA ligase from Geobacillus thermodenitrificans (strain NG80-2).